The sequence spans 107 residues: Large ribosomal subunit protein P2 (107 aa).

Positions 86–107 (PAAAAAEAEEEDDDDMGFGLFD) are disordered. The segment covering 92–101 (EAEEEDDDDM) has biased composition (acidic residues).

Belongs to the eukaryotic ribosomal protein P1/P2 family. As to quaternary structure, P1 and P2 exist as dimers at the large ribosomal subunit. Phosphorylated.

Plays an important role in the elongation step of protein synthesis. This chain is Large ribosomal subunit protein P2, found in Trypanosoma brucei brucei.